Here is an 860-residue protein sequence, read N- to C-terminus: LPS-assembly protein LptD (860 aa).

A signal peptide spans 1 to 21; sequence MTKRYFSLLAVCSAIATSTFA.

This sequence belongs to the LptD family. As to quaternary structure, component of the lipopolysaccharide transport and assembly complex. Interacts with LptE and LptA.

Its subcellular location is the cell outer membrane. Its function is as follows. Together with LptE, is involved in the assembly of lipopolysaccharide (LPS) at the surface of the outer membrane. This chain is LPS-assembly protein LptD, found in Saccharophagus degradans (strain 2-40 / ATCC 43961 / DSM 17024).